The following is a 203-amino-acid chain: dTTP/UTP pyrophosphatase (203 aa).

D70 (proton acceptor) is an active-site residue.

The protein belongs to the Maf family. YhdE subfamily. Requires a divalent metal cation as cofactor.

It localises to the cytoplasm. The catalysed reaction is dTTP + H2O = dTMP + diphosphate + H(+). It carries out the reaction UTP + H2O = UMP + diphosphate + H(+). In terms of biological role, nucleoside triphosphate pyrophosphatase that hydrolyzes dTTP and UTP. May have a dual role in cell division arrest and in preventing the incorporation of modified nucleotides into cellular nucleic acids. The sequence is that of dTTP/UTP pyrophosphatase (maf-1) from Pseudomonas putida (strain ATCC 47054 / DSM 6125 / CFBP 8728 / NCIMB 11950 / KT2440).